Reading from the N-terminus, the 263-residue chain is ATP synthase subunit delta (263 aa).

The protein belongs to the ATPase delta chain family. In terms of assembly, F-type ATPases have 2 components, F(1) - the catalytic core - and F(0) - the membrane proton channel. F(1) has five subunits: alpha(3), beta(3), gamma(1), delta(1), epsilon(1). F(0) has three main subunits: a(1), b(2) and c(10-14). The alpha and beta chains form an alternating ring which encloses part of the gamma chain. F(1) is attached to F(0) by a central stalk formed by the gamma and epsilon chains, while a peripheral stalk is formed by the delta and b chains.

It localises to the cell membrane. In terms of biological role, f(1)F(0) ATP synthase produces ATP from ADP in the presence of a proton or sodium gradient. F-type ATPases consist of two structural domains, F(1) containing the extramembraneous catalytic core and F(0) containing the membrane proton channel, linked together by a central stalk and a peripheral stalk. During catalysis, ATP synthesis in the catalytic domain of F(1) is coupled via a rotary mechanism of the central stalk subunits to proton translocation. This protein is part of the stalk that links CF(0) to CF(1). It either transmits conformational changes from CF(0) to CF(1) or is implicated in proton conduction. The polypeptide is ATP synthase subunit delta (Cutibacterium acnes (strain DSM 16379 / KPA171202) (Propionibacterium acnes)).